A 718-amino-acid polypeptide reads, in one-letter code: Polyribonucleotide nucleotidyltransferase (718 aa).

2 residues coordinate Mg(2+): aspartate 487 and aspartate 493. Positions 554-613 constitute a KH domain; that stretch reads PRIETFKIPTDKIREVIGTGGKVIREIVEKTGAKVNIEDDGTVKVASSDGESIKAAIKWI. The S1 motif domain maps to 623–691; sequence GEIYEGTVVK…DRGKTRLSMK (69 aa). Residues 692 to 718 form a disordered region; that stretch reads VVDQETGEDLEAKQKAEGDAPREAAGE. Over residues 701–718 the composition is skewed to basic and acidic residues; that stretch reads LEAKQKAEGDAPREAAGE.

Belongs to the polyribonucleotide nucleotidyltransferase family. Mg(2+) is required as a cofactor.

It localises to the cytoplasm. It carries out the reaction RNA(n+1) + phosphate = RNA(n) + a ribonucleoside 5'-diphosphate. Involved in mRNA degradation. Catalyzes the phosphorolysis of single-stranded polyribonucleotides processively in the 3'- to 5'-direction. This Nitrobacter winogradskyi (strain ATCC 25391 / DSM 10237 / CIP 104748 / NCIMB 11846 / Nb-255) protein is Polyribonucleotide nucleotidyltransferase.